We begin with the raw amino-acid sequence, 137 residues long: ATP synthase epsilon chain (137 aa).

It belongs to the ATPase epsilon chain family. In terms of assembly, F-type ATPases have 2 components, CF(1) - the catalytic core - and CF(0) - the membrane proton channel. CF(1) has five subunits: alpha(3), beta(3), gamma(1), delta(1), epsilon(1). CF(0) has three main subunits: a, b and c.

The protein localises to the cell membrane. Produces ATP from ADP in the presence of a proton gradient across the membrane. This chain is ATP synthase epsilon chain, found in Caldicellulosiruptor saccharolyticus (strain ATCC 43494 / DSM 8903 / Tp8T 6331).